The primary structure comprises 551 residues: Glucans biosynthesis protein D (551 aa).

A signal peptide (tat-type signal) is located at residues 1 to 32 (MDRRRFIKGSMAMAAVCGTSGIASLFSQAAFA).

It belongs to the OpgD/OpgG family. Post-translationally, predicted to be exported by the Tat system. The position of the signal peptide cleavage has not been experimentally proven.

The protein localises to the periplasm. It participates in glycan metabolism; osmoregulated periplasmic glucan (OPG) biosynthesis. In terms of biological role, probably involved in the control of the structural glucose backbone of osmoregulated periplasmic glucans (OPGs). The chain is Glucans biosynthesis protein D from Escherichia coli O127:H6 (strain E2348/69 / EPEC).